Here is a 316-residue protein sequence, read N- to C-terminus: N-acetylmuramic acid 6-phosphate etherase (316 aa).

The tract at residues 1-23 (MAGFDPTLQPSDDRGHLLTEQSN) is disordered. The 164-residue stretch at 66–229 (ISKRLSSGGR…STTVMVRLGK (164 aa)) folds into the SIS domain. Catalysis depends on E94, which acts as the Proton donor. Residue E125 is part of the active site.

Belongs to the GCKR-like family. MurNAc-6-P etherase subfamily. Homodimer.

The enzyme catalyses N-acetyl-D-muramate 6-phosphate + H2O = N-acetyl-D-glucosamine 6-phosphate + (R)-lactate. It functions in the pathway amino-sugar metabolism; N-acetylmuramate degradation. Specifically catalyzes the cleavage of the D-lactyl ether substituent of MurNAc 6-phosphate, producing GlcNAc 6-phosphate and D-lactate. The sequence is that of N-acetylmuramic acid 6-phosphate etherase from Synechococcus sp. (strain CC9902).